The primary structure comprises 472 residues: Coronin-6 (472 aa).

5 WD repeats span residues 79 to 119, 129 to 169, 173 to 212, 216 to 259, and 264 to 304; these read GHTG…PVRN, GHSK…VLLS, IHPD…VVAE, AHEG…EPVA, and DTSN…PFVH. The interval 409–434 is disordered; that stretch reads NILDVRPPASPRRSQSASEAPLSQQH. The span at 419–429 shows a compositional bias: low complexity; it reads PRRSQSASEAP. The stretch at 430-469 forms a coiled coil; that stretch reads LSQQHTLETLLEEMKALRERVQAQEERITALENMLCELVD.

The protein is Coronin-6 (Coro6) of Rattus norvegicus (Rat).